The primary structure comprises 265 residues: Small ribosomal subunit protein uS3 (265 aa).

Positions 39-107 (VREFLKKKLK…PVHVNIEEIR (69 aa)) constitute a KH type-2 domain. The interval 211 to 265 (NDAPVVEEPQEDRRRRPGRPEGRRREGEGRPAGNRRGGAGAGRRAAPGADAKSGE) is disordered. Over residues 221-239 (EDRRRRPGRPEGRRREGEG) the composition is skewed to basic and acidic residues.

This sequence belongs to the universal ribosomal protein uS3 family. As to quaternary structure, part of the 30S ribosomal subunit. Forms a tight complex with proteins S10 and S14.

In terms of biological role, binds the lower part of the 30S subunit head. Binds mRNA in the 70S ribosome, positioning it for translation. The sequence is that of Small ribosomal subunit protein uS3 from Cupriavidus metallidurans (strain ATCC 43123 / DSM 2839 / NBRC 102507 / CH34) (Ralstonia metallidurans).